Here is a 70-residue protein sequence, read N- to C-terminus: Conotoxin Ep11.12 (70 aa).

The first 26 residues, 1–26, serve as a signal peptide directing secretion; that stretch reads MMFRVTSVGCFLLVILSLNLVVLTNA. 4 disulfide bridges follow: cysteine 27–cysteine 41, cysteine 34–cysteine 46, cysteine 40–cysteine 50, and cysteine 45–cysteine 54. Proline amide is present on proline 57. The propeptide occupies 61 to 70; that stretch reads AKLREFFRQR.

The protein belongs to the conotoxin I2 superfamily. In terms of tissue distribution, expressed by the venom duct.

It localises to the secreted. This Conus episcopatus (Bishop's cone) protein is Conotoxin Ep11.12.